A 94-amino-acid polypeptide reads, in one-letter code: Selenoprotein K (94 aa).

Residues 20 to 42 form a helical membrane-spanning segment; the sequence is LSFLTDFFWGAVEFIGLFFQTLV. A disordered region spans residues 48-94; it reads KDGNNSASSRFSDGRGPPGFPGRRRMGRINHGAGPTPPPMGGGGUGR. Over residues 49–58 the composition is skewed to polar residues; the sequence is DGNNSASSRF. Residue Sec92 is a non-standard amino acid, selenocysteine.

Belongs to the selenoprotein K family.

The protein localises to the endoplasmic reticulum membrane. It is found in the cell membrane. Its function is as follows. Required for Ca(2+) flux in immune cells and plays a role in T-cell proliferation and in T-cell and neutrophil migration. Involved in endoplasmic reticulum-associated degradation (ERAD) of soluble glycosylated proteins. Required for cell surface expression of CD36 and involved in macrophage uptake of low-density lipoprotein and in foam cell formation. Required for palmitoylation. The polypeptide is Selenoprotein K (selenok) (Danio rerio (Zebrafish)).